The primary structure comprises 428 residues: MTVYVEKVRALEIFDSRGNPTVEVHAYLSDGTVAKAEVPSGASTGEKEAVELRDGGNRLQGKGVTQAVTNVNGPINDALKGLSPYNQAEIDRTMIKLDGTLNKAKLGANAILGTSMAIARAAARSKDEPLYRYLGGCELEMPQTFHNVINGGKHADNGIDIQEFMITPVAKNSFRDGFEKIVNTYHALKAVIEEAGFETGLGDEGGFAPNLNSSEEALKMLRKAIIKAGYKPRKDIAIAFDAAASSFYNTEDGKYHFEGHIWNGEEMLQYYDKLLKEFPEIISCEDPFDENDWENFEKFTAKFGSTHQVVADDNVCTNPKLVRKAIKDKLCNSILIKLNQIGTITETLETIRLARKNNMTTMVSHRSGETGDTFIADFTVATNAGQLKSGAPARSERVEKYNRLLEIENQIGVENERLNHFPNNVDFD.

Residue Q162 coordinates (2R)-2-phosphoglycerate. Catalysis depends on E204, which acts as the Proton donor. Residues D241, E285, and D312 each coordinate Mg(2+). Residues K337, R366, S367, and K388 each contribute to the (2R)-2-phosphoglycerate site. Catalysis depends on K337, which acts as the Proton acceptor.

This sequence belongs to the enolase family. Requires Mg(2+) as cofactor.

The protein localises to the cytoplasm. Its subcellular location is the secreted. It localises to the cell surface. It carries out the reaction (2R)-2-phosphoglycerate = phosphoenolpyruvate + H2O. It participates in carbohydrate degradation; glycolysis; pyruvate from D-glyceraldehyde 3-phosphate: step 4/5. In terms of biological role, catalyzes the reversible conversion of 2-phosphoglycerate (2-PG) into phosphoenolpyruvate (PEP). It is essential for the degradation of carbohydrates via glycolysis. The chain is Enolase 2 from Lactobacillus johnsonii (strain CNCM I-12250 / La1 / NCC 533).